The following is a 791-amino-acid chain: Pleckstrin homology domain-containing family H member 3 (791 aa).

An N-terminal signal peptide occupies residues 1–18; the sequence is MPLPGGLWWLLCCRRGFT. The span at 29 to 41 shows a compositional bias: acidic residues; it reads LSGDGDEDEDDET. The disordered stretch occupies residues 29–71; the sequence is LSGDGDEDEDDETFELRSPSPAGGGRGSLDVTLTQPTRNGPIT. Ser-30 carries the post-translational modification Phosphoserine. The span at 59–71 shows a compositional bias: polar residues; it reads VTLTQPTRNGPIT. The 105-residue stretch at 95–199 folds into the PH domain; it reads DVIVKGWLYR…WGVALREVIA (105 aa). The MyTH4 domain occupies 237-399; that stretch reads HTSSALYAPL…PSLAEISALS (163 aa). The region spanning 404-755 is the FERM domain; that stretch reads LLCTVHCPGA…ANPSPERPCS (352 aa). Positions 549–559 are enriched in low complexity; sequence PRGPLPLLDRL. Disordered regions lie at residues 549-580 and 593-623; these read PRGP…PPPS and LAKR…GGGS. The segment covering 594 to 605 has biased composition (basic residues); the sequence is AKRRAERARRIG. Arg-636 bears the Omega-N-methylarginine mark. A disordered region spans residues 748 to 791; it reads PSPERPCSSSGPPSQDLSDTSPPSQHQVLEKPQGQSGCLRQLQD. Residues 754-791 show a composition bias toward polar residues; sequence CSSSGPPSQDLSDTSPPSQHQVLEKPQGQSGCLRQLQD.

This Rattus norvegicus (Rat) protein is Pleckstrin homology domain-containing family H member 3 (Plekhh3).